The primary structure comprises 648 residues: Macrolide export ATP-binding/permease protein MacB (648 aa).

The ABC transporter domain occupies 5–243; sequence LELCNVSRSY…QGVDAAVVNT (239 aa). 41 to 48 contributes to the ATP binding site; it reads GVSGSGKS. The next 5 helical transmembrane spans lie at 273–293, 417–437, 523–543, 578–598, and 611–631; these read LLTMLGIIIGIASVVSIVVVG, ANVVGEVVLVGNMPVIVIGVA, LFLTLVAVISLVVGGIGVMNI, LVCLVGGALGISLSMFIAFML, and LTALASAFLCSTFTGILFGWL.

It belongs to the ABC transporter superfamily. Macrolide exporter (TC 3.A.1.122) family. In terms of assembly, homodimer. Part of the tripartite efflux system MacAB-TolC, which is composed of an inner membrane transporter, MacB, a periplasmic membrane fusion protein, MacA, and an outer membrane component, TolC. The complex forms a large protein conduit and can translocate molecules across both the inner and outer membranes. Interacts with MacA.

Its subcellular location is the cell inner membrane. In terms of biological role, part of the tripartite efflux system MacAB-TolC. MacB is a non-canonical ABC transporter that contains transmembrane domains (TMD), which form a pore in the inner membrane, and an ATP-binding domain (NBD), which is responsible for energy generation. Confers resistance against macrolides. The protein is Macrolide export ATP-binding/permease protein MacB of Salmonella paratyphi A (strain ATCC 9150 / SARB42).